The chain runs to 230 residues: Peptidyl-prolyl cis-trans isomerase FKBP16-4, chloroplastic (230 aa).

The transit peptide at 1–56 (MILTMKLVHPLHHSLSSSIPFPSRKRQSKPYRCSLPSPGCEKVIRTETVLPPAPVS) directs the protein to the chloroplast. The PPIase FKBP-type domain occupies 123-217 (GSRVAVHYVA…ELDIELLSIK (95 aa)).

The protein belongs to the FKBP-type PPIase family.

It localises to the plastid. Its subcellular location is the chloroplast thylakoid lumen. The catalysed reaction is [protein]-peptidylproline (omega=180) = [protein]-peptidylproline (omega=0). In terms of biological role, PPIases accelerate the folding of proteins. It catalyzes the cis-trans isomerization of proline imidic peptide bonds in oligopeptides. The sequence is that of Peptidyl-prolyl cis-trans isomerase FKBP16-4, chloroplastic (FKBP16-4) from Arabidopsis thaliana (Mouse-ear cress).